Consider the following 140-residue polypeptide: Large ribosomal subunit protein uL14 (140 aa).

It belongs to the universal ribosomal protein uL14 family.

This is Large ribosomal subunit protein uL14 (RpL23-A) from Aedes aegypti (Yellowfever mosquito).